A 297-amino-acid polypeptide reads, in one-letter code: SWIRM domain-containing protein laf1 (297 aa).

Disordered stretches follow at residues 50–70 (PKCS…KPTA) and 109–173 (STPA…EFSS). Residues 159 to 173 (QHNTRFKQSSREFSS) are compositionally biased toward polar residues. An SWIRM domain is found at 207 to 297 (LRSEWKGPPL…AFHDEGFFDD (91 aa)).

Component of the RPD3C(L) complex.

Its subcellular location is the nucleus. Functionally, component of the RPD3C(L) histone deacetylase complex (HDAC) responsible for the deacetylation of lysine residues on the N-terminal part of the core histones (H2A, H2B, H3 and H4). Histone deacetylation gives a tag for epigenetic repression and plays an important role in transcriptional regulation, cell cycle progression and developmental events. The protein is SWIRM domain-containing protein laf1 (laf1) of Schizosaccharomyces pombe (strain 972 / ATCC 24843) (Fission yeast).